The sequence spans 405 residues: 8-amino-7-oxononanoate synthase 2 (405 aa).

Substrate is bound at residue R20. Position 116 to 117 (116 to 117) interacts with pyridoxal 5'-phosphate; sequence GY. H141 contacts substrate. 3 residues coordinate pyridoxal 5'-phosphate: S187, H215, and T243. At K246 the chain carries N6-(pyridoxal phosphate)lysine. Residue T369 coordinates substrate.

The protein belongs to the class-II pyridoxal-phosphate-dependent aminotransferase family. BioF subfamily. Homodimer. Pyridoxal 5'-phosphate is required as a cofactor.

It catalyses the reaction 6-carboxyhexanoyl-[ACP] + L-alanine + H(+) = (8S)-8-amino-7-oxononanoate + holo-[ACP] + CO2. It functions in the pathway cofactor biosynthesis; biotin biosynthesis. Functionally, catalyzes the decarboxylative condensation of pimeloyl-[acyl-carrier protein] and L-alanine to produce 8-amino-7-oxononanoate (AON), [acyl-carrier protein], and carbon dioxide. The polypeptide is 8-amino-7-oxononanoate synthase 2 (Polaromonas sp. (strain JS666 / ATCC BAA-500)).